Here is a 225-residue protein sequence, read N- to C-terminus: 3-dehydroquinate dehydratase (225 aa).

3-dehydroquinate is bound by residues Ser6, 30-32 (EWR), and Arg62. The active-site Proton donor/acceptor is the His118. Catalysis depends on Lys143, which acts as the Schiff-base intermediate with substrate. 3-dehydroquinate contacts are provided by Arg186, Ser205, and Gln209.

The protein belongs to the type-I 3-dehydroquinase family. In terms of assembly, homodimer.

The enzyme catalyses 3-dehydroquinate = 3-dehydroshikimate + H2O. It participates in metabolic intermediate biosynthesis; chorismate biosynthesis; chorismate from D-erythrose 4-phosphate and phosphoenolpyruvate: step 3/7. In terms of biological role, involved in the third step of the chorismate pathway, which leads to the biosynthesis of aromatic amino acids. Catalyzes the cis-dehydration of 3-dehydroquinate (DHQ) and introduces the first double bond of the aromatic ring to yield 3-dehydroshikimate. The polypeptide is 3-dehydroquinate dehydratase (Streptococcus pneumoniae (strain Hungary19A-6)).